A 148-amino-acid polypeptide reads, in one-letter code: Endoribonuclease YbeY (148 aa).

Positions 113, 117, and 123 each coordinate Zn(2+).

It belongs to the endoribonuclease YbeY family. It depends on Zn(2+) as a cofactor.

The protein localises to the cytoplasm. Single strand-specific metallo-endoribonuclease involved in late-stage 70S ribosome quality control and in maturation of the 3' terminus of the 16S rRNA. In Borrelia hermsii (strain HS1 / DAH), this protein is Endoribonuclease YbeY.